Consider the following 393-residue polypeptide: 4-O-methyl-glucuronoyl methylesterase (393 aa).

Positions 1-19 (MKLSAALLAIAAFANVASA) are cleaved as a signal peptide. Gln-20 carries the post-translational modification Pyrrolidone carboxylic acid. Cys-22 and Cys-56 are joined by a disulfide. N-linked (GlcNAc...) asparagine glycans are attached at residues Asn-103 and Asn-168. Residues 203–208 (GCSRNG) carry the GXSYXG catalytic site motif motif. 2 cysteine pairs are disulfide-bonded: Cys-204/Cys-340 and Cys-236/Cys-312. Ser-205 functions as the Nucleophile in the catalytic mechanism. Positions 209, 251, 259, and 303 each coordinate substrate. His-339 (proton donor/acceptor) is an active-site residue.

This sequence belongs to the carbohydrate esterase 15 (CE15) family.

It localises to the secreted. It catalyses the reaction a 4-O-methyl-alpha-D-glucuronosyl ester derivative + H2O = 4-O-methyl-alpha-D-glucuronate derivative + an alcohol + H(+). Functionally, glucuronoyl esterase which may play a significant role in biomass degradation, as it is considered to disconnect hemicellulose from lignin through the hydrolysis of the ester bond between 4-O-methyl-D-glucuronic acid residues of glucuronoxylans and aromatic alcohols of lignin. The sequence is that of 4-O-methyl-glucuronoyl methylesterase from Schizophyllum commune (strain H4-8 / FGSC 9210) (Split gill fungus).